The sequence spans 1134 residues: Envelopment polyprotein (1134 aa).

An N-terminal signal peptide occupies residues 1–16 (MWSLLLLAALVGQGFA). Topologically, residues 17-484 (LKNVFDMRIQ…PGFHGWATAA (468 aa)) are lumenal. 10 cysteine pairs are disulfide-bonded: Cys27/Cys149, Cys61/Cys155, Cys107/Cys126, Cys131/Cys136, Cys173/Cys183, Cys208/Cys245, Cys232/Cys349, Cys374/Cys433, Cys378/Cys387, and Cys403/Cys422. Asn132 carries N-linked (GlcNAc...) asparagine; by host glycosylation. N-linked (GlcNAc...) asparagine; by host glycans are attached at residues Asn233 and Asn345. A glycan (N-linked (GlcNAc...) asparagine; by host) is linked at Asn397. Residues 485–504 (LLITFCFGWVLIPACTLAIL) form a helical membrane-spanning segment. The Cytoplasmic segment spans residues 505–626 (LVLKFFANIL…NLFRYKSRCY (122 aa)). The segment at 514–531 (LHTSNQENRFKAILRKIK) is binding to the ribonucleoprotein. 2 consecutive CCHC-type zinc fingers follow at residues 543 to 563 (CEIC…NLSC) and 568 to 589 (CPYC…YKVC). 3 binding to the ribonucleoprotein regions span residues 586 to 603 (YKVC…KKTV), 590 to 601 (QATHRFREDLKK), and 609 to 623 (WARL…RYKS). The region spanning 609 to 632 (WARLYRTLNLFRYKSRCYILTMWT) is the ITAM domain. Positions 613-616 (YRTL) match the YxxL motif. The helical transmembrane segment at 627-647 (ILTMWTLLLIIESILWAASAA) threads the bilayer. Topologically, residues 648–1105 (EIPLVPLWTD…WVMGIINGNW (458 aa)) are lumenal. Cystine bridges form between Cys734–Cys769, Cys738–Cys776, Cys750–Cys884, Cys764–Cys895, Cys779–Cys903, Cys805–Cys814, Cys822–Cys831, and Cys862–Cys866. A fusion loop region spans residues 756 to 776 (YEYENSWACNPPDCPGVGTGC). Asn927 carries an N-linked (GlcNAc...) asparagine; by host glycan. 5 cysteine pairs are disulfide-bonded: Cys969-Cys999, Cys992-Cys1044, Cys1009-Cys1014, Cys1045-Cys1050, and Cys1084-Cys1088. Residues 1106 to 1125 (VVLIVLCVLLLFSLILLSIL) traverse the membrane as a helical segment. The interval 1121-1134 (LLSILCPVRKHKKS) is binding to the ribonucleoprotein. The Cytoplasmic segment spans residues 1126-1134 (CPVRKHKKS).

It belongs to the hantavirus envelope glycoprotein family. As to quaternary structure, homodimer. Homotetramer; forms heterotetrameric Gn-Gc spikes in the pre-fusion conformation. Interacts (via C-terminus) with the nucleoprotein. Interacts with host TUFM; this interaction contributes to the virus-induced degradation of mitochondria by autophagy, which leads to degradation of host MAVS and inhibition of type I interferon (IFN) responses. Interacts with host MAP1LC3B; this interaction contributes to the virus-induced degradation of mitochondria by autophagy, which leads to degradation of host MAVS and inhibition of type I interferon (IFN) responses. Homodimer. Homotetramer; forms heterotetrameric Gn-Gc spikes in the pre-fusion conformation. Homotrimer; forms homotrimer in the post-fusion conformation at acidic pH. Interacts (via C-terminus) with the nucleoprotein. Post-translationally, envelope polyprotein precursor is quickly cleaved in vivo just after synthesis, presumably by host signal peptidase.

It is found in the virion membrane. The protein localises to the host cell surface. It localises to the host Golgi apparatus membrane. Its subcellular location is the host endoplasmic reticulum membrane. The protein resides in the host mitochondrion. Forms homotetramers with glycoprotein C at the surface of the virion. Attaches the virion to host cell receptors including integrin ITGAV/ITGB3. This attachment induces virion internalization predominantly through clathrin-dependent endocytosis. Mediates the assembly and budding of infectious virus particles through its interaction with the nucleocapsid protein and the viral genome. May dysregulate normal immune and endothelial cell responses through an ITAM motif. Translocates to mitochondria, binds to host TUFM and recruits MAP1LC3B. These interactions induce mitochondrial autophagy and therefore destruction of host MAVS leading to inhibition of type I interferon (IFN) responses. Concomitant breakdown of glycoprotein N is apparently prevented by the nucleoprotein that may inhibit Gn-stimulated autophagosome-lysosome fusion. Interacts with the viral genomic RNA. In terms of biological role, forms homotetramers with glycoprotein N at the surface of the virion. Attaches the virion to host cell receptors including integrin ITGAV/ITGB3. This attachment induces virion internalization predominantly through clathrin-dependent endocytosis. Class II fusion protein that promotes fusion of viral membrane with host endosomal membrane after endocytosis of the virion. The protein is Envelopment polyprotein (GP) of Homo sapiens (Human).